A 397-amino-acid polypeptide reads, in one-letter code: P2X purinoceptor 3 (397 aa).

Over 1 to 20 (MNCISDFFTYETTKSVVVKS) the chain is Cytoplasmic. The helical transmembrane segment at 21-43 (WTIGIINRAVQLLIISYFVGWVF) threads the bilayer. At 44–322 (LHEKAYQVRD…AGKFNIIPTI (279 aa)) the chain is on the extracellular side. ATP is bound by residues K63 and K65. Disulfide bonds link C107–C153, C116–C137, and C122–C147. E111 lines the Mg(2+) pocket. N-linked (GlcNAc...) asparagine glycosylation occurs at N139. D158 serves as a coordination point for Mg(2+). Residue D158 coordinates Ca(2+). N-linked (GlcNAc...) asparagine glycosylation occurs at N170. Residue T172 coordinates ATP. N-linked (GlcNAc...) asparagine glycosylation is present at N194. Disulfide bonds link C203/C213 and C247/C256. ATP contacts are provided by S275, N279, and R281. N290 carries an N-linked (GlcNAc...) asparagine glycan. Position 299 (K299) interacts with ATP. A helical transmembrane segment spans residues 323 to 341 (ISSVAAFTSVGVGTVLCDI). The Cytoplasmic portion of the chain corresponds to 342 to 397 (ILLNFLKGADHYKARKFEEVTETTLKGTASTNPVFTSDQATVEKQSTDSGAYSIGH).

The protein belongs to the P2X receptor family. Homotrimer. Forms heterotrimer with P2RX2. Heterotrimeric P2RX2/3 has a ligand dose-response profile that is distinct from either homotrimeric P2RX2 or P2RX3.

The protein resides in the cell membrane. It carries out the reaction Ca(2+)(in) = Ca(2+)(out). It catalyses the reaction Na(+)(in) = Na(+)(out). With respect to regulation, has high sensitivity to ATP. Fast activation by external ATP. Exhibits rapid desensitization. Sensitives to the ATP agonist:alpha/beta-methylene-ATP. Subject to allosteric inhibition by AF-219. Mg(2+) and Ca(2+) slow deactivation of P2RX3. Extracellular ATP-activated non-selective cation channel. Plays particularly important role in sensory neurons where its activation is critical for gustatory, nociceptive responses, visceral reflexes and sensory hypersensitization. The sequence is that of P2X purinoceptor 3 (P2rx3) from Mus musculus (Mouse).